We begin with the raw amino-acid sequence, 114 residues long: Large ribosomal subunit protein uL22 (114 aa).

The protein belongs to the universal ribosomal protein uL22 family. As to quaternary structure, part of the 50S ribosomal subunit.

This protein binds specifically to 23S rRNA; its binding is stimulated by other ribosomal proteins, e.g. L4, L17, and L20. It is important during the early stages of 50S assembly. It makes multiple contacts with different domains of the 23S rRNA in the assembled 50S subunit and ribosome. Its function is as follows. The globular domain of the protein is located near the polypeptide exit tunnel on the outside of the subunit, while an extended beta-hairpin is found that lines the wall of the exit tunnel in the center of the 70S ribosome. This is Large ribosomal subunit protein uL22 from Aeromonas hydrophila subsp. hydrophila (strain ATCC 7966 / DSM 30187 / BCRC 13018 / CCUG 14551 / JCM 1027 / KCTC 2358 / NCIMB 9240 / NCTC 8049).